Reading from the N-terminus, the 280-residue chain is Feruloyl esterase 1 (280 aa).

Positions methionine 1 to alanine 20 are cleaved as a signal peptide. 3 disulfide bridges follow: cysteine 49-cysteine 278, cysteine 111-cysteine 114, and cysteine 247-cysteine 254. The N-linked (GlcNAc...) asparagine glycan is linked to asparagine 99. The active-site Nucleophile is serine 153. The active-site Charge relay system is aspartate 214. The active-site Charge relay system is histidine 267.

This sequence belongs to the AB hydrolase superfamily. FaeA family. Post-translationally, glycosylated.

The protein localises to the secreted. It carries out the reaction feruloyl-polysaccharide + H2O = ferulate + polysaccharide.. Metal or basic ions Mn(2+), Ni(+), Mg(2+), and NH(4)(+) decrease the activity by 4.4% to 14.1%. The enzymatic activity is inhibited by Zn(2+) at a low concentration (1 mM) but not a high concentration (5 mM). Loses about a quarter of activity by the addition of 1 mM of Cu(2+) or Fe(3+) and activity is completely suppressed when the concentration was up to 5 mM. Low concentrations (0.25 and 0.5 M) of NaCl improve the activity by 5.6 % or 8.3%, respectively. In terms of biological role, involved in degradation of plant cell walls. Hydrolyzes the feruloyl-arabinose ester bond in arabinoxylans, and the feruloyl-galactose ester bond in pectin. In Penicillium parvum (Eupenicillium parvum), this protein is Feruloyl esterase 1.